Reading from the N-terminus, the 147-residue chain is UPF0179 protein MTH_609 (147 aa).

The protein belongs to the UPF0179 family.

The polypeptide is UPF0179 protein MTH_609 (Methanothermobacter thermautotrophicus (strain ATCC 29096 / DSM 1053 / JCM 10044 / NBRC 100330 / Delta H) (Methanobacterium thermoautotrophicum)).